The following is a 530-amino-acid chain: Dual specificity calcium/calmodulin-dependent 3',5'-cyclic nucleotide phosphodiesterase 1A (530 aa).

2 calmodulin-binding regions span residues 24–44 (TEKM…QLEK) and 114–137 (EKPR…MYRK). One can recognise a PDEase domain in the interval 142 to 508 (VGLAYPEAVI…ERWKELAAQG (367 aa)). The Proton donor role is filled by His219. Residues His223, His259, Asp260, and Asp366 each coordinate Zn(2+). Asp260 contacts Mg(2+). Disordered stretches follow at residues 450–471 (TKTP…NDGT) and 502–530 (KELA…ETHS). Residues 451-471 (KTPSYGASRRSNMKGTTNDGT) show a composition bias toward polar residues. Positions 510 to 530 (PDPHKNSDLVNAEEKHAETHS) are enriched in basic and acidic residues.

This sequence belongs to the cyclic nucleotide phosphodiesterase family. PDE1 subfamily. As to quaternary structure, homodimer. Interacts with YWHAZ. Requires Zn(2+) as cofactor. It depends on Mg(2+) as a cofactor.

It catalyses the reaction a nucleoside 3',5'-cyclic phosphate + H2O = a nucleoside 5'-phosphate + H(+). The enzyme catalyses 3',5'-cyclic GMP + H2O = GMP + H(+). The catalysed reaction is 3',5'-cyclic AMP + H2O = AMP + H(+). Its activity is regulated as follows. Type I PDE are activated by the binding of calmodulin in the presence of Ca(2+). Functionally, calcium/calmodulin-dependent cyclic nucleotide phosphodiesterase with a dual specificity for the second messengers cGMP and cAMP, which are key regulators of many important physiological processes. Has a higher efficiency with cGMP compared to cAMP. The sequence is that of Dual specificity calcium/calmodulin-dependent 3',5'-cyclic nucleotide phosphodiesterase 1A from Bos taurus (Bovine).